A 501-amino-acid polypeptide reads, in one-letter code: Dynein regulatory complex subunit 5 (501 aa).

The segment covering 1–23 (MQDTVTTSALLDPSHSSVSTQDN) has biased composition (polar residues). Disordered regions lie at residues 1-56 (MQDT…HPRA) and 202-222 (LPAQLRPGDQSDSGSEGEMEE). Low complexity predominate over residues 24–34 (SSTGGHTSSTS). LRR repeat units lie at residues 308 to 321 (VLEELDLSQNLIGD), 335 to 355 (RLRVLNLANNQVRAPGAQSLA), 363 to 383 (NLISLNLRLNCIEDEGGQALA), 391 to 411 (CLTTLHLGGNELSEPTATLLS), and 419 to 439 (TLTSINLSCNHIGLDGGKQLL).

This sequence belongs to the DRC5 family. As to quaternary structure, component of the nexin-dynein regulatory complex (N-DRC). Interacts with DRC1. Interacts with FBXL13/DRC6, DRC3 and DRC7.

The protein localises to the cell projection. The protein resides in the cilium. It localises to the flagellum. It is found in the cytoplasm. Its subcellular location is the cytoskeleton. The protein localises to the flagellum axoneme. In terms of biological role, component of the nexin-dynein regulatory complex (N-DRC) a key regulator of ciliary/flagellar motility which maintains the alignment and integrity of the distal axoneme and regulates microtubule sliding in motile axonemes. May play a role in the assembly of N-DRC. May be required for sperm motility. The polypeptide is Dynein regulatory complex subunit 5 (TCTE1) (Homo sapiens (Human)).